We begin with the raw amino-acid sequence, 614 residues long: Vitamin B12 transporter BtuB (614 aa).

The first 20 residues, 1 to 20 (MIKKASLLTACSVTAFSAWA), serve as a signal peptide directing secretion. Residues 26 to 33 (DTLVVTAN) carry the TonB box motif. One can recognise a TBDR plug domain in the interval 38–152 (PRSTVLAPTT…IGGVVNIITT (115 aa)). Cyanocob(III)alamin contacts are provided by residues leucine 83, serine 85, asparagine 92, and 110-111 (VS). The region spanning 155–614 (HPGTEISAGW…EYTLSGSYTF (460 aa)) is the TBDR beta-barrel domain. Beta stranded transmembrane passes span 158-165 (TEISAGWG), 169-178 (YQNYDVSTQQ), and 184-195 (TRVTLLGDYAHT). Residues aspartate 199, glutamine 211, aspartate 213, and aspartate 215 each contribute to the Ca(2+) site. Beta stranded transmembrane passes span 217 to 227 (FLSKTLYGALE) and 232 to 248 (DVWS…NRTN). Tyrosine 249 and aspartate 250 together coordinate Ca(2+). Residue alanine 251 participates in cyanocob(III)alamin binding. Aspartate 261 contacts Ca(2+). 14 beta stranded membrane passes run 263–277 (RKLY…LRYN), 279–296 (ELIK…KDYN), 309–325 (TLDE…NNII), 328–337 (HGNIGAGVDW), 353–369 (YDQR…QQVG), 371–381 (FTFEGAGRSDD), 385–400 (FGRH…WEFI), 403–417 (YRFI…KAPN), 434–443 (KSKQWEGAFE), 449–458 (VNWRISGYRN), 473–490 (YYNE…TANF), 494–509 (PLTH…ARNA), 517–529 (RRAK…QLDW), and 535–550 (DWGI…YDKD). Threonine 309 is a cyanocob(III)alamin binding site. Residue arginine 517 coordinates cyanocob(III)alamin. Residue tyrosine 551 coordinates cyanocob(III)alamin. 3 beta stranded membrane passes run 558–572 (TVKM…LAVA), 585–596 (IANLFDKDYETV), and 602–614 (AGRE…SYTF). The TonB C-terminal box signature appears at 597–614 (YGYQTAGREYTLSGSYTF).

Belongs to the TonB-dependent receptor family. BtuB (TC 1.B.14.3.1) subfamily.

The protein resides in the cell outer membrane. In terms of biological role, involved in the active translocation of vitamin B12 (cyanocobalamin) across the outer membrane to the periplasmic space. It derives its energy for transport by interacting with the trans-periplasmic membrane protein TonB. This Escherichia coli O1:K1 / APEC protein is Vitamin B12 transporter BtuB.